The primary structure comprises 88 residues: uncharacterized protein (88 aa).

It belongs to the phD/YefM antitoxin family.

This is an uncharacterized protein from Sinorhizobium fredii (strain NBRC 101917 / NGR234).